The chain runs to 375 residues: MLEANVYDNFNPNYYNISDFSMPNGKKEKRGLPIPKARCQVINYELWETGYLYTSSATLTVSVEVGDIVQILFPEVVPIEEALGKKKKLNLDMVYLVTDVDESNKATLKNYFWAMIESLDVPNAITKTTNFAIIDYLIDPNKNNLMSYGYFFNSSIFAGKATINRKAETSSAHDVAKRIFSKVQFQPTTTIQHAPSETDPRNLLFINFASRNWNRKRITTRVDIKQSVTMDTETIVERSAYNFAVVFVKNKATDDYTDPPKMYIAKNNGDVIDYSTYHGDGTDLPDVRTAKTLFYDRDDHGNPPELSTIKVEISPSTIVTRLIFNQNELLPLYVNDLVDIWYEGKLYSGYIADRVKTEFNDRLIFVESGDKPNVI.

The protein belongs to the skunalikevirus baseplate protein gp16 family. In terms of assembly, homotrimer.

The protein localises to the virion. Functionally, forms a dome thereby closing the central channel at the end of the baseplate. Changes its conformation upon activation by calcium allowing the channel to open at the bottom of the baseplate for DNA ejection. This Lactococcus lactis (Lactococcus lactis bacteriophage p2) protein is Baseplate protein gp16.